The chain runs to 170 residues: Protein-lysine myristoyltransferase HlyC (170 aa).

Catalysis depends on residues H23 and D92. A heme-binding site is contributed by H151.

This sequence belongs to the RTX toxin acyltransferase family. Monomer. In terms of processing, proteolytically cleaved by the protease systems ClpAP, ClpXP and FtsH, leading to its degradation.

The protein localises to the cytoplasm. The catalysed reaction is tetradecanoyl-[ACP] + L-lysyl-[protein] = N(6)-tetradecanoyl-L-lysyl-[protein] + holo-[ACP] + H(+). Its activity is regulated as follows. The acyltransferase activity is inhibited by heme. In terms of biological role, protein-lysine myristoyltransferase that catalyzes myristoylation of the protoxin (HlyA) at two internal lysine residues, thereby converting it to the active toxin. This Escherichia coli protein is Protein-lysine myristoyltransferase HlyC.